The following is a 282-amino-acid chain: Blarina toxin (282 aa).

A signal peptide spans 1-17 (MCFLLLCLTLTLAGTGA). The propeptide at 18 to 29 (VPTGPSIEIHSR) is activation peptide. The Peptidase S1 domain maps to 30-279 (IIGGWECDKH…YISWIQETIK (250 aa)). 5 disulfides stabilise this stretch: C36–C194, C57–C73, C170–C240, C205–C219, and C230–C255. Catalysis depends on H72, which acts as the Charge relay system. S100 is a glycosylation site (O-linked (GalNAc...) serine). Residues N109 and N122 are each glycosylated (N-linked (GlcNAc...) asparagine). The active-site Charge relay system is D138. The Charge relay system role is filled by S234.

This sequence belongs to the peptidase S1 family. Kallikrein subfamily. As to expression, submaxillary and sublingual salivary glands.

The protein resides in the secreted. With respect to regulation, strongly inhibited by aprotinin, moderately inhibited by secretory leukoprotease inhibitor, the Kunitz-type soybean trypsin inhibitor, and leupeptin, and not inhibited by urinary trypsin inhibitor or alpha-1 protease inhibitor. Has kallikrein-like activity, converts kininogens to kinins, and has dilatory effects on the blood vessel walls. Shows highest activity toward Pro-Phe-Arg-MCA and Boc-Val-Leu-Lys-MCA in vitro. Has preference for Arg and Lys in position P1 and hydrophobic residues in position P2. The chain is Blarina toxin (BTX) from Blarina brevicauda (Northern short-tailed shrew).